Here is an 832-residue protein sequence, read N- to C-terminus: Mechanosensitive cation channel TMEM63B (832 aa).

Residues Met1–Gly40 lie on the Extracellular side of the membrane. Residues Val41 to Val65 form a helical membrane-spanning segment. Cys51 carries S-palmitoyl cysteine lipidation. Residues Ala66–Gly145 lie on the Cytoplasmic side of the membrane. Residues Arg86 to Arg88 carry the Mediates endoplasmic reticulum retention motif. 4 positions are modified to phosphoserine: Ser111, Ser113, Ser114, and Ser115. Residue Cys126 is the site of S-palmitoyl cysteine attachment. A helical membrane pass occupies residues Gly146 to Phe178. Over Ser179–Asn202 the chain is Extracellular. A helical transmembrane segment spans residues Asn203–Thr227. The Cytoplasmic portion of the chain corresponds to Ser228 to Gly427. The interval Arg231–Arg426 is intracellular linker IL2; confers mechanosensitivity. Residues Cys382 and Cys398 are each lipidated (S-palmitoyl cysteine). The chain crosses the membrane as a helical span at residues Phe428–Thr457. Topologically, residues Met458–Asn472 are extracellular. The N-linked (GlcNAc...) asparagine glycan is linked to Asn462. A helical membrane pass occupies residues Pro473–Glu502. The Cytoplasmic segment spans residues Ala503–Thr506. The helical transmembrane segment at Arg507 to Trp543 threads the bilayer. Residues Leu544–Gly566 are Extracellular-facing. The helical transmembrane segment at Ala567 to Cys599 threads the bilayer. The tract at residues Ala567–Cys599 is gating helix. At Leu600–Gln619 the chain is on the cytoplasmic side. Residues Phe620–Ser638 traverse the membrane as a helical segment. Over Ile639–Cys641 the chain is Extracellular. The chain crosses the membrane as a helical span at residues Pro642 to Ala666. Residues Tyr667 to Asp673 lie on the Cytoplasmic side of the membrane. Residues Lys674–Arg702 traverse the membrane as a helical segment. Residues Thr703–Ala707 are Extracellular-facing. The chain crosses the membrane as a helical span at residues Pro708–Val728. S-palmitoyl cysteine attachment occurs at residues Cys726 and Cys729. The Cytoplasmic portion of the chain corresponds to Cys729 to Gln832. Disordered regions lie at residues Thr748 to Lys767 and Leu776 to Phe818. Polar residues predominate over residues Asp749–Arg758. Low complexity predominate over residues Pro789 to Ser801.

This sequence belongs to the CSC1 (TC 1.A.17) family. In terms of assembly, monomer. Interacts with SLC19A2; interaction is required for the phospholipid scramblase activity. Palmitoylation is required for localization to the plasma membrane and stability. In terms of tissue distribution, expressed in cochlear hair cells (at protein level). Highly expressed in the subfornical organ of the brain. Expressed in small intestine. As to expression, brain-specific.

It is found in the cell membrane. Its subcellular location is the endoplasmic reticulum membrane. The protein localises to the lysosome membrane. It localises to the early endosome membrane. The catalysed reaction is Ca(2+)(in) = Ca(2+)(out). The enzyme catalyses Mg(2+)(in) = Mg(2+)(out). It catalyses the reaction K(+)(in) = K(+)(out). It carries out the reaction Na(+)(in) = Na(+)(out). The catalysed reaction is Cs(+)(in) = Cs(+)(out). The enzyme catalyses a 1,2-diacyl-sn-glycero-3-phosphocholine(in) = a 1,2-diacyl-sn-glycero-3-phosphocholine(out). It catalyses the reaction a sphingomyelin(in) = a sphingomyelin(out). Its function is as follows. Mechanosensitive cation channel with low conductance and high activation threshold. Osmosensitive cation channel preferentially activated by hypotonic stress. Also acts as a phospholipid scramblase in response to changes in membrane structure: upon changes in membrane curvature and thickness, alters its conformation and translocates phospholipids, such as phosphatidylcholine and sphingomyelin, thereby controlling plasma membrane lipid distribution. Forms a heterodimer with SLC19A2, which mediates phospholipid scramblase activity following Ca(2+) stimulation. Expressed in excitatory neurons of the subfornical organ and functions as a thirst receptor that mediates neuronal response to hyperosmolality to drive thirst and drinking behavior. Facilitates intestinal motility by promoting proliferation of intestinal stem cells. Essential for the baby's first breath and respiration throughout life. Upon lung inflation conducts cation currents in alveolar type 1 and 2 cells triggering lamellar body exocytosis and surfactant secretion into airspace. Acts as an osmosensor in cochlear outer hair cells (OHCs) where it mediates calcium influx and regulatory volume decrease response. Required for the maintenance of OHC morphology, OHC survival and normal hearing. Brain-specific osmosensitive calcium channel isoform. The sequence is that of Mechanosensitive cation channel TMEM63B from Mus musculus (Mouse).